The chain runs to 379 residues: Anhydro-N-acetylmuramic acid kinase (379 aa).

Position 9–16 (glycine 9–aspartate 16) interacts with ATP.

The protein belongs to the anhydro-N-acetylmuramic acid kinase family.

The enzyme catalyses 1,6-anhydro-N-acetyl-beta-muramate + ATP + H2O = N-acetyl-D-muramate 6-phosphate + ADP + H(+). Its pathway is amino-sugar metabolism; 1,6-anhydro-N-acetylmuramate degradation. It functions in the pathway cell wall biogenesis; peptidoglycan recycling. Its function is as follows. Catalyzes the specific phosphorylation of 1,6-anhydro-N-acetylmuramic acid (anhMurNAc) with the simultaneous cleavage of the 1,6-anhydro ring, generating MurNAc-6-P. Is required for the utilization of anhMurNAc either imported from the medium or derived from its own cell wall murein, and thus plays a role in cell wall recycling. The polypeptide is Anhydro-N-acetylmuramic acid kinase (Prochlorococcus marinus (strain MIT 9211)).